A 505-amino-acid polypeptide reads, in one-letter code: Methylmalonyl-CoA carboxyltransferase 5S subunit (505 aa).

A Pyruvate carboxyltransferase domain is found at 14-276; the sequence is VGITELVLRD…TTNLDYDRLH (263 aa). Residues 22-26, Ala-59, and Lys-184 contribute to the substrate site; that span reads RDAHQ. Asp-23 lines the Co(2+) pocket. 3 residues coordinate Co(2+): Lys-184, His-215, and His-217. Lys-184 carries the post-translational modification N6-carboxylysine; partial.

Homodimer. Transcarboxylase is composed of three subunits: 1.3S, 5S, and 12S. The core of the enzyme is composed of six 12S subunits. On each side of the core there are three pairs of 5S subunits. Each 5S dimer is attached to the core by two 1.3S subunits. Thus the total number of chains is 30 (6 + 12 + 12). Co(2+) is required as a cofactor. In terms of processing, lys-184 is carboxylated in the free enzyme and helps to coordinate the cobalt ion. Lys-184 is partially carboxylated in the complex with pyruvate, but is not carboxylated in the oxaloacetate-bound form.

It catalyses the reaction (S)-methylmalonyl-CoA + pyruvate = propanoyl-CoA + oxaloacetate. The 5S subunit specifically catalyzes the transfer of the carboxyl group from biotin of the 1.3S subunit to pyruvate to form oxaloacetate and 1.3S biotin. This chain is Methylmalonyl-CoA carboxyltransferase 5S subunit, found in Propionibacterium freudenreichii subsp. shermanii.